A 119-amino-acid chain; its full sequence is Flagellar transcriptional regulator FlhD (119 aa).

It belongs to the FlhD family. Homodimer; disulfide-linked. Forms a heterohexamer composed of two FlhC and four FlhD subunits. Each FlhC binds a FlhD dimer, forming a heterotrimer, and a hexamer assembles by dimerization of two heterotrimers.

The protein localises to the cytoplasm. Functions in complex with FlhC as a master transcriptional regulator that regulates transcription of several flagellar and non-flagellar operons by binding to their promoter region. Activates expression of class 2 flagellar genes, including fliA, which is a flagellum-specific sigma factor that turns on the class 3 genes. Also regulates genes whose products function in a variety of physiological pathways. In Shigella boydii serotype 4 (strain Sb227), this protein is Flagellar transcriptional regulator FlhD.